We begin with the raw amino-acid sequence, 521 residues long: Importin subunit alpha-3 (521 aa).

A2 is modified (N-acetylalanine). An IBB domain is found at A2–E58. The short motif at E43 to P52 is the Nuclear localization signal element. The residue at position 60 (S60) is a Phosphoserine. The stretch at Y66–P106 is one ARM 1; truncated repeat. ARM repeat units follow at residues I107 to Q149, T150 to Y194, V195 to P233, P234 to Q278, M279 to Q318, T319 to Q360, V361 to R400, and K401 to E443. The interval W137 to R229 is NLS binding site (major). The interval R306 to N394 is NLS binding site (minor). Residues E447 to F485 form an ARM 10; atypical repeat.

It belongs to the importin alpha family. In terms of assembly, forms a complex with importin subunit beta-1 (KPNB1). Interacts with SNAI1. Interacts with TALDO1 isoform 1. Interacts with CYB1. In terms of tissue distribution, detected more or less in all tissues examined (Ehrlich ascites tumor cells, testis, kidney, spleen, liver, heart, lung, thymus, skeletal muscle, cerebellum and brain (without cerebellum)). Multiple-sized transcripts were highly expressed, especially in testis.

It localises to the cytoplasm. The protein localises to the nucleus. Functionally, functions in nuclear protein import as an adapter protein for nuclear receptor KPNB1. Binds specifically and directly to substrates containing either a simple or bipartite NLS motif. Docking of the importin/substrate complex to the nuclear pore complex (NPC) is mediated by KPNB1 through binding to nucleoporin FxFG repeats and the complex is subsequently translocated through the pore by an energy requiring, Ran-dependent mechanism. At the nucleoplasmic side of the NPC, Ran binds to importin-beta and the three components separate and importin-alpha and -beta are re-exported from the nucleus to the cytoplasm where GTP hydrolysis releases Ran from importin. The directionality of nuclear import is thought to be conferred by an asymmetric distribution of the GTP- and GDP-bound forms of Ran between the cytoplasm and nucleus. Mediates nuclear import of AARS1, MRTFA and RANBP3. The sequence is that of Importin subunit alpha-3 (Kpna4) from Mus musculus (Mouse).